The chain runs to 426 residues: DNA polymerase processivity factor component A20 (426 aa).

The protein belongs to the poxviruses A20 family. In terms of assembly, interacts with the DNA polymerase catalytic subunit E9. Interacts with UDG. Component of the Uracil-DNA glycosylase(UDG)-A20-polymerase complex; A20 and UDG form a heterodimeric processivity factor that associates with E9 to form the processive polymerase holoenzyme. Interacts with D5.

In terms of biological role, plays an essential role in viral DNA replication by acting as the polymerase processivity factor together with protein D4. May serve as a bridge which links the DNA polymerase E9 and the uracil DNA glycosylase. This Vaccinia virus (strain Ankara) (VACV) protein is DNA polymerase processivity factor component A20.